The sequence spans 287 residues: Polyamine aminopropyltransferase (287 aa).

Residues 5 to 238 (ETWHETLHDH…GIMTFAWASQ (234 aa)) form the PABS domain. Glutamine 33 is a binding site for S-methyl-5'-thioadenosine. Spermidine is bound by residues histidine 64 and aspartate 88. S-methyl-5'-thioadenosine-binding positions include glutamate 108 and 140–141 (DG). Aspartate 158 acts as the Proton acceptor in catalysis. 158–161 (DCTD) contacts spermidine. Position 165 (proline 165) interacts with S-methyl-5'-thioadenosine.

The protein belongs to the spermidine/spermine synthase family. As to quaternary structure, homodimer or homotetramer.

It is found in the cytoplasm. The catalysed reaction is S-adenosyl 3-(methylsulfanyl)propylamine + putrescine = S-methyl-5'-thioadenosine + spermidine + H(+). Its pathway is amine and polyamine biosynthesis; spermidine biosynthesis; spermidine from putrescine: step 1/1. In terms of biological role, catalyzes the irreversible transfer of a propylamine group from the amino donor S-adenosylmethioninamine (decarboxy-AdoMet) to putrescine (1,4-diaminobutane) to yield spermidine. This Sodalis glossinidius (strain morsitans) protein is Polyamine aminopropyltransferase.